Here is a 1159-residue protein sequence, read N- to C-terminus: Phosphatidylinositol 3-kinase age-1 (1159 aa).

Polar residues predominate over residues 1–25; that stretch reads MSMGRSSSTTFRNRTASHGSRSLGS. A disordered region spans residues 1–28; sequence MSMGRSSSTTFRNRTASHGSRSLGSAET. Residues 79–179 form the PI3K-ABD domain; that stretch reads SEGVADMIVL…FPMLFLFEPD (101 aa). In terms of domain architecture, PI3K-RBD spans 272-363; sequence RKSEANEVWE…YRCPGFVVRR (92 aa). Positions 430–588 constitute a C2 PI3K-type domain; it reads LDSNLMIRPV…VKMPNEAQYK (159 aa). One can recognise a PIK helical domain in the interval 607–793; it reads DYEACIGDPG…SLLMEAYLRG (187 aa). The region spanning 858-1159 is the PI3K/PI4K catalytic domain; the sequence is VIEKAIVLGS…NWLFHAMKHY (302 aa). The G-loop stretch occupies residues 864–870; sequence VLGSAKQ. A catalytic loop region spans residues 1028–1036; the sequence is GIKDRHSDN. An activation loop region spans residues 1047–1073; sequence HIDFGHILGHGKTKLGIQRDRQPFILT.

It belongs to the PI3/PI4-kinase family.

The enzyme catalyses a 1,2-diacyl-sn-glycero-3-phospho-(1D-myo-inositol) + ATP = a 1,2-diacyl-sn-glycero-3-phospho-(1D-myo-inositol-3-phosphate) + ADP + H(+). Its function is as follows. Phosphatidylinositol 3-kinase homolog that regulates longevity and diapause. Promotes cell survival during embryonic development by recruiting akt-1/2 to the plasma membrane through the production of PtdIns(3,4,5)P3. Could function in the development or neuroendocrine signaling of the dauer pathway. Mediates susceptibility to enteropathogenic E.coli infection. May negatively regulate AYI interneuron neurite outgrowth. Plays a role in aversive olfactory learning when an odor is associated with food deprivation. Regulates this process by promoting the nuclear relocalization of egl-4 in AWC olfactory neurons after odor conditioning. In Caenorhabditis briggsae, this protein is Phosphatidylinositol 3-kinase age-1 (age-1).